Here is a 364-residue protein sequence, read N- to C-terminus: Cobalt-precorrin-5B C(1)-methyltransferase (364 aa).

This sequence belongs to the CbiD family.

The enzyme catalyses Co-precorrin-5B + S-adenosyl-L-methionine = Co-precorrin-6A + S-adenosyl-L-homocysteine. It participates in cofactor biosynthesis; adenosylcobalamin biosynthesis; cob(II)yrinate a,c-diamide from sirohydrochlorin (anaerobic route): step 6/10. In terms of biological role, catalyzes the methylation of C-1 in cobalt-precorrin-5B to form cobalt-precorrin-6A. In Pseudomonas putida (strain W619), this protein is Cobalt-precorrin-5B C(1)-methyltransferase.